A 267-amino-acid polypeptide reads, in one-letter code: Phosphoethanolamine/phosphocholine phosphatase (267 aa).

The active-site Nucleophile is aspartate 32. Residues aspartate 32 and aspartate 34 each contribute to the Mg(2+) site. Aspartate 34 (proton donor) is an active-site residue. Positions 43 and 123 each coordinate substrate. Aspartate 203 contacts Mg(2+).

The protein belongs to the HAD-like hydrolase superfamily. PHOSPHO family. Mg(2+) is required as a cofactor. As to expression, expressed at sites of mineralization in bone and cartilage. Highly expressed in osteoblast cell line SaOS-2 which produces a mineralized matrix, but not in MG-63 cell line, which do not mineralize.

It is found in the extracellular vesicle. It catalyses the reaction phosphoethanolamine + H2O = ethanolamine + phosphate. The enzyme catalyses phosphocholine + H2O = choline + phosphate. Its function is as follows. Phosphatase that has a high activity toward phosphoethanolamine (PEA) and phosphocholine (PCho). Involved in the generation of inorganic phosphate for bone mineralization. Acts in a non-redundant manner with PHOSPHO1 in skeletal mineralization: while PHOSPHO1 mediates the initiation of hydroxyapatite crystallization in the matrix vesicles (MVs), ALPL/TNAP catalyzes the spread of hydroxyapatite crystallization in the extracellular matrix. The polypeptide is Phosphoethanolamine/phosphocholine phosphatase (Homo sapiens (Human)).